A 112-amino-acid polypeptide reads, in one-letter code: MATTIDQTSIKSLHFHQVIRLIITIIFLAFLFLIGPTSSMNHHLHESSSKNTMAPSKRFLLQPSTPSSSTMKMRPTAHPRRSGTSSSSARKRRREFRAEAHEVPSGPNPISN.

An N-terminal signal peptide occupies residues 1-39; it reads MATTIDQTSIKSLHFHQVIRLIITIIFLAFLFLIGPTSS. Residues 41–112 form a disordered region; that stretch reads NHHLHESSSK…VPSGPNPISN (72 aa). Residues 62–71 show a composition bias toward polar residues; that stretch reads QPSTPSSSTM. A hydroxyproline mark is found at proline 104 and proline 107. The O-linked (Ara...) hydroxyproline glycan is linked to proline 107.

Belongs to the CLV3/ESR signal peptide family. As to quaternary structure, interacts specifically with the leucine-rich repeat receptor-like protein kinase TDR, especially in the presence of SERK2. In terms of processing, the O-glycosylation (arabinosylation) of the hydroxyproline Pro-107 enhances binding affinity of the CLE44p peptide for its receptor. In terms of tissue distribution, mostly expressed in flowers and leaves. Widely expressed along the vascular strands. In roots and hypocotyls, present in endodermal cells as well as cells in the phloem and the adjacent pericycle.

It is found in the secreted. It localises to the extracellular space. In terms of biological role, extracellular signal peptide that regulates cell fate. May act with TDR as a ligand-receptor pair in a signal transduction pathway that represses tracheary element differentiation but promotes the formation of procambial cells adjacent to phloem cells in the veins. Regulates the transition of protophloem cells from proliferation to differentiation, thus impinging on postembryonic growth capacity of the root meristem; this signaling pathway requires CRN and CLV2. This is CLAVATA3/ESR (CLE)-related protein 44 from Arabidopsis thaliana (Mouse-ear cress).